We begin with the raw amino-acid sequence, 698 residues long: Probable metal-nicotianamine transporter YSL17 (698 aa).

Residues 1–36 (MAEEARGGQRVVVDDDREDASSVASSTERAFEGEPL) form a disordered region. The next 14 membrane-spanning stretches (helical) occupy residues 43-63 (VTAR…VVAM), 67-87 (LTSG…FFLA), 114-134 (IAVV…YILG), 157-177 (IGRV…IIVP), 216-236 (VVTL…QWFF), 277-297 (MITA…WPYI), 322-342 (VFVG…SALV), 395-415 (WVAV…VPLL), 424-444 (VAAA…GVGV), 463-483 (SWVG…GIIV), 511-531 (VGQV…FWVF), 567-587 (LPDH…ALSA), 607-627 (IGVA…AVGC), and 644-664 (LLLP…SLAS).

The protein belongs to the YSL (TC 2.A.67.2) family. In terms of tissue distribution, expressed at low levels in roots.

It localises to the membrane. In terms of biological role, may be involved in the transport of nicotianamine-chelated metals. The chain is Probable metal-nicotianamine transporter YSL17 (YSL17) from Oryza sativa subsp. japonica (Rice).